The primary structure comprises 196 residues: Elongation factor Ts (196 aa).

Residues 80–83 (TDFV) form an involved in Mg(2+) ion dislocation from EF-Tu region.

Belongs to the EF-Ts family.

The protein localises to the cytoplasm. In terms of biological role, associates with the EF-Tu.GDP complex and induces the exchange of GDP to GTP. It remains bound to the aminoacyl-tRNA.EF-Tu.GTP complex up to the GTP hydrolysis stage on the ribosome. This chain is Elongation factor Ts, found in Thermus thermophilus (strain ATCC BAA-163 / DSM 7039 / HB27).